The following is a 302-amino-acid chain: Fluoroacetate dehalogenase (302 aa).

The AB hydrolase-1 domain maps to 32 to 270 (PPLLLLHGFP…LDVWRKWASD (239 aa)). Catalysis depends on D110, which acts as the Nucleophile. Residues R111, R114, H155, W156, and Y219 each coordinate fluoroacetate. The active-site Proton acceptor is H280.

Belongs to the AB hydrolase superfamily. Epoxide hydrolase family. As to quaternary structure, homodimer.

The enzyme catalyses a haloacetate + H2O = a halide anion + glycolate + H(+). It carries out the reaction fluoroacetate + H2O = fluoride + glycolate + H(+). The catalysed reaction is chloroacetate + H2O = glycolate + chloride + H(+). Functionally, catalyzes the hydrolytic defluorination of fluoroacetate to produce glycolate. Has lower activity towards chloroacetate and bromoacetate. The chain is Fluoroacetate dehalogenase from Rhodopseudomonas palustris (strain ATCC BAA-98 / CGA009).